Consider the following 690-residue polypeptide: Wilms tumor protein 1-interacting protein homolog (690 aa).

2 disordered regions span residues methionine 151–arginine 316 and threonine 328–serine 372. The span at serine 152 to serine 186 shows a compositional bias: low complexity. Polar residues-rich tracts occupy residues glutamate 204–glycine 214, proline 223–aspartate 233, proline 240–isoleucine 261, and proline 272–aspartate 292. Residues serine 335 to serine 357 show a composition bias toward low complexity. LIM zinc-binding domains are found at residues glycine 479–glutamine 540, aspartate 544–alanine 603, and proline 604–valine 673.

Belongs to the zyxin/ajuba family. As to quaternary structure, interacts with prickle3.

It localises to the cell junction. The protein resides in the adherens junction. Its subcellular location is the nucleus. In terms of biological role, may monitor slit diaphragm protein assembly, a specialized adherens junction characteristic of podocytes. In case of podocyte injury, it shuttles into the nucleus and acts as a transcription regulator. Plays a role in the regulation of cell morphology and cytoskeletal organization. Acts as a transcriptional corepressor for snai1 and snai2/slug and plays a role in regulating neural crest development. Involved in the organization of the basal body. Involved in cilia growth and positioning. The protein is Wilms tumor protein 1-interacting protein homolog (wtip) of Xenopus laevis (African clawed frog).